The sequence spans 202 residues: Heat shock 22 kDa protein, mitochondrial (202 aa).

The transit peptide at 1–31 (MASSLALKRFLSSGLLSSSFLRPVASSASRS) directs the protein to the mitochondrion. The 109-residue stretch at 94 to 202 (VLSAASRRGW…RNNVINVKVD (109 aa)) folds into the sHSP domain.

Belongs to the small heat shock protein (HSP20) family.

The protein localises to the mitochondrion. This is Heat shock 22 kDa protein, mitochondrial (HSP22) from Pisum sativum (Garden pea).